We begin with the raw amino-acid sequence, 183 residues long: MKLLFPVFASLMLQYQVNTEFIGLRRCLMGFGRCRDHCNVDEKEIQKCKMKKCCVGPKVVKLIKNYLQYGIPNVLNEDVQEMLKPAKNSSAVIQRKHILSVLPQIKSTSFFANTNFVIIPNATPMNSATISTMTPGQITYTATSTKSNTKESRDSATASPPPAPPPPNILPTPSLELEKAEEQ.

Positions 1–19 are cleaved as a signal peptide; the sequence is MKLLFPVFASLMLQYQVNT. 3 disulfide bridges follow: Cys27–Cys53, Cys34–Cys48, and Cys38–Cys54. The tract at residues 141-183 is disordered; that stretch reads TATSTKSNTKESRDSATASPPPAPPPPNILPTPSLELEKAEEQ. Pro residues predominate over residues 159 to 170; the sequence is SPPPAPPPPNIL.

Belongs to the beta-defensin family.

It is found in the secreted. Its function is as follows. Has antibacterial activity. This is Beta-defensin 129 (DEFB129) from Pongo pygmaeus (Bornean orangutan).